Consider the following 266-residue polypeptide: Lipooligosaccharide biosynthesis protein lic2B (266 aa).

This sequence belongs to the glycosyltransferase 25 family.

Involved in extracellular lipooligosaccharide (LOS) biosynthesis and virulence expression. Involved in the synthesis of the oligosaccharide moiety of the LOS molecule by adding GalNAc. This chain is Lipooligosaccharide biosynthesis protein lic2B (lic2B), found in Haemophilus influenzae.